Consider the following 170-residue polypeptide: Putative beta-eliminating lyase-like protein (170 aa).

Lys-32 is subject to N6-(pyridoxal phosphate)lysine.

Belongs to the beta-eliminating lyase family. Requires pyridoxal 5'-phosphate as cofactor.

The protein is Putative beta-eliminating lyase-like protein of Dictyostelium discoideum (Social amoeba).